Consider the following 370-residue polypeptide: Aminomethyltransferase (370 aa).

It belongs to the GcvT family. The glycine cleavage system is composed of four proteins: P, T, L and H.

It carries out the reaction N(6)-[(R)-S(8)-aminomethyldihydrolipoyl]-L-lysyl-[protein] + (6S)-5,6,7,8-tetrahydrofolate = N(6)-[(R)-dihydrolipoyl]-L-lysyl-[protein] + (6R)-5,10-methylene-5,6,7,8-tetrahydrofolate + NH4(+). Functionally, the glycine cleavage system catalyzes the degradation of glycine. This Stenotrophomonas maltophilia (strain R551-3) protein is Aminomethyltransferase.